A 324-amino-acid polypeptide reads, in one-letter code: Protein ChrB (324 aa).

Together with ChrA1, this protein reduces chromate accumulation and is essential for chromate resistance, possibly as a regulatory protein. The chain is Protein ChrB from Cupriavidus metallidurans (strain ATCC 43123 / DSM 2839 / NBRC 102507 / CH34) (Ralstonia metallidurans).